We begin with the raw amino-acid sequence, 126 residues long: Large ribosomal subunit protein bL12 (126 aa).

The protein belongs to the bacterial ribosomal protein bL12 family. In terms of assembly, homodimer. Part of the ribosomal stalk of the 50S ribosomal subunit. Forms a multimeric L10(L12)X complex, where L10 forms an elongated spine to which 2 to 4 L12 dimers bind in a sequential fashion. Binds GTP-bound translation factors.

In terms of biological role, forms part of the ribosomal stalk which helps the ribosome interact with GTP-bound translation factors. Is thus essential for accurate translation. The polypeptide is Large ribosomal subunit protein bL12 (Moorella thermoacetica (strain ATCC 39073 / JCM 9320)).